We begin with the raw amino-acid sequence, 194 residues long: Thymidine kinase (194 aa).

Residues 15-22 (GPMFSGKS) and 89-92 (DEAH) contribute to the ATP site. The active-site Proton acceptor is the E90. Residues C146, C149, C178, and C181 each coordinate Zn(2+).

It belongs to the thymidine kinase family. In terms of assembly, homotetramer.

The protein resides in the cytoplasm. It carries out the reaction thymidine + ATP = dTMP + ADP + H(+). This Metamycoplasma arthritidis (strain 158L3-1) (Mycoplasma arthritidis) protein is Thymidine kinase.